The following is a 488-amino-acid chain: MSQISMFVRKLHKFSYNPNYKFKCGLEIHTQLKTKYKLFSLSPTSYNEPPNTKLSYFDVGLPGTQPLLNPEALLLALKASVALNCDIQSYSSFDRKHYFYADQPLGYQITQHYYPLAKNGYVQLNKFDDMPDKVISLEQVQLEQDTGKTVNYDDRINVDLNRANTPLIEVVTKPDFENIDQVQAFVRKYQLLVSHLDICTGDLETGAIRVDANISVNNNPRVEIKNLGSSGEIVDALKYEYNRQVTLLQNNGKIIQETRGWNGIATESLRKKENAVDYRYVPDSELPVIRLDKNIQAQLQNTLDELPDSVLDRLTKEPYNLQLAHARNLLFQPEILDYYENIFGRIRDANKWFFHELLAAFAKSDVEFQVDIVSPDMLVDIVSSVEKNEISLTGARIILKHIIRNKSTKTLPQLIKELDIGKPEASAELEEAINEICQQIINTNADVVEKIARGHTNALQVLIGQAMKATKGKVHAKEFRSKFMELLK.

Belongs to the GatB/GatE family. GatB subfamily. As to quaternary structure, subunit of the heterotrimeric GatFAB amidotransferase (AdT) complex, composed of A, B and F subunits.

The protein localises to the mitochondrion. It catalyses the reaction L-glutamyl-tRNA(Gln) + L-glutamine + ATP + H2O = L-glutaminyl-tRNA(Gln) + L-glutamate + ADP + phosphate + H(+). Allows the formation of correctly charged Gln-tRNA(Gln) through the transamidation of misacylated Glu-tRNA(Gln) in the mitochondria. The reaction takes place in the presence of glutamine and ATP through an activated gamma-phospho-Glu-tRNA(Gln). This is Glutamyl-tRNA(Gln) amidotransferase subunit B, mitochondrial from Candida albicans (strain WO-1) (Yeast).